Consider the following 245-residue polypeptide: 1-(5-phosphoribosyl)-5-[(5-phosphoribosylamino)methylideneamino] imidazole-4-carboxamide isomerase (245 aa).

D10 functions as the Proton acceptor in the catalytic mechanism. The active-site Proton donor is D135.

It belongs to the HisA/HisF family.

The protein resides in the cytoplasm. The enzyme catalyses 1-(5-phospho-beta-D-ribosyl)-5-[(5-phospho-beta-D-ribosylamino)methylideneamino]imidazole-4-carboxamide = 5-[(5-phospho-1-deoxy-D-ribulos-1-ylimino)methylamino]-1-(5-phospho-beta-D-ribosyl)imidazole-4-carboxamide. Its pathway is amino-acid biosynthesis; L-histidine biosynthesis; L-histidine from 5-phospho-alpha-D-ribose 1-diphosphate: step 4/9. This chain is 1-(5-phosphoribosyl)-5-[(5-phosphoribosylamino)methylideneamino] imidazole-4-carboxamide isomerase, found in Methanosarcina barkeri (strain Fusaro / DSM 804).